A 335-amino-acid chain; its full sequence is Nucleoid-associated protein KPK_1538 (335 aa).

It belongs to the YejK family.

Its subcellular location is the cytoplasm. The protein resides in the nucleoid. In Klebsiella pneumoniae (strain 342), this protein is Nucleoid-associated protein KPK_1538.